A 216-amino-acid chain; its full sequence is Small ribosomal subunit protein uS3c (216 aa).

The region spanning Ile-43–Glu-118 is the KH type-2 domain.

This sequence belongs to the universal ribosomal protein uS3 family. Part of the 30S ribosomal subunit.

It is found in the plastid. In Cuscuta reflexa (Southern Asian dodder), this protein is Small ribosomal subunit protein uS3c (rps3).